The following is a 506-amino-acid chain: Maturase K (506 aa).

It belongs to the intron maturase 2 family. MatK subfamily.

The protein localises to the plastid. It is found in the chloroplast. In terms of biological role, usually encoded in the trnK tRNA gene intron. Probably assists in splicing its own and other chloroplast group II introns. The chain is Maturase K from Prunus persica (Peach).